Here is a 355-residue protein sequence, read N- to C-terminus: Guanine nucleotide-binding protein G(o) subunit alpha (355 aa).

A compositionally biased stretch (low complexity) spans 1-17 (MGCASSAEERAAPSAQQ). Positions 1-24 (MGCASSAEERAAPSAQQADREKLK) are disordered. Gly2 is lipidated: N-myristoyl glycine. Cys3 is lipidated: S-palmitoyl cysteine. The 324-residue stretch at 32-355 (KDIKLLLLGA…ANNLRGCGLY (324 aa)) folds into the G-alpha domain. The G1 motif stretch occupies residues 35–48 (KLLLLGAGESGKST). Residues 40 to 47 (GAGESGKS), 176 to 182 (LRTRVKT), 201 to 205 (DVGRG), 201 to 206 (DVGRGQ), 271 to 274 (NKKD), and Ala327 each bind GTP. The Mg(2+) site is built by Ser47 and Thr182. The tract at residues 174-182 (DILRTRVKT) is G2 motif. A G3 motif region spans residues 197–206 (FKLFDVGRGQ). The interval 267–274 (ILFLNKKD) is G4 motif. A G5 motif region spans residues 326-330 (TATDT).

It belongs to the G-alpha family. G(i/o/t/z) subfamily. As to quaternary structure, g proteins are composed of 3 units; alpha, beta and gamma. The alpha chain contains the guanine nucleotide binding site.

Its function is as follows. Guanine nucleotide-binding proteins (G proteins) are involved as modulators or transducers in various transmembrane signaling systems. The G(o) protein function is not clear. This Manduca sexta (Tobacco hawkmoth) protein is Guanine nucleotide-binding protein G(o) subunit alpha.